An 824-amino-acid polypeptide reads, in one-letter code: AMP deaminase 2 (824 aa).

Residues 1–43 form a disordered region; the sequence is MASYPGPGKSKAKYPFKKRAGLQASAAAPEARSGLGASPLQSA. Basic residues predominate over residues 10–20; that stretch reads SKAKYPFKKRA. R44 carries the post-translational modification Omega-N-methylarginine. Phosphoserine is present on residues S45, S63, and S79. Y90 bears the Phosphotyrosine mark. Residues S96 and S113 each carry the phosphoserine modification. The residue at position 133 (T133) is a Phosphothreonine. Phosphoserine occurs at positions 135 and 137. H364 and H366 together coordinate Zn(2+). Substrate contacts are provided by residues H366 and 435 to 440; that span reads KFNAKY. H633 contributes to the Zn(2+) binding site. E636 is a substrate binding site. H655 serves as the catalytic Proton acceptor. D710 serves as a coordination point for Zn(2+). Substrate is bound at residue 711-714; sequence DPLQ.

The protein belongs to the metallo-dependent hydrolases superfamily. Adenosine and AMP deaminases family. In terms of assembly, homotetramer. Zn(2+) is required as a cofactor.

It catalyses the reaction AMP + H2O + H(+) = IMP + NH4(+). It functions in the pathway purine metabolism; IMP biosynthesis via salvage pathway; IMP from AMP: step 1/1. In terms of biological role, AMP deaminase plays a critical role in energy metabolism. Catalyzes the deamination of AMP to IMP and plays an important role in the purine nucleotide cycle. This Mus musculus (Mouse) protein is AMP deaminase 2.